Consider the following 281-residue polypeptide: Imidazole glycerol phosphate synthase subunit HisF (281 aa).

Catalysis depends on residues aspartate 12 and aspartate 131. The disordered stretch occupies residues 256–281 (VRQAEPLPQPAREGLGDSARRAMSSG).

It belongs to the HisA/HisF family. Heterodimer of HisH and HisF.

It is found in the cytoplasm. It carries out the reaction 5-[(5-phospho-1-deoxy-D-ribulos-1-ylimino)methylamino]-1-(5-phospho-beta-D-ribosyl)imidazole-4-carboxamide + L-glutamine = D-erythro-1-(imidazol-4-yl)glycerol 3-phosphate + 5-amino-1-(5-phospho-beta-D-ribosyl)imidazole-4-carboxamide + L-glutamate + H(+). Its pathway is amino-acid biosynthesis; L-histidine biosynthesis; L-histidine from 5-phospho-alpha-D-ribose 1-diphosphate: step 5/9. IGPS catalyzes the conversion of PRFAR and glutamine to IGP, AICAR and glutamate. The HisF subunit catalyzes the cyclization activity that produces IGP and AICAR from PRFAR using the ammonia provided by the HisH subunit. The polypeptide is Imidazole glycerol phosphate synthase subunit HisF (Thermosynechococcus vestitus (strain NIES-2133 / IAM M-273 / BP-1)).